A 430-amino-acid chain; its full sequence is Gamma-glutamyl phosphate reductase (430 aa).

Belongs to the gamma-glutamyl phosphate reductase family.

The protein resides in the cytoplasm. It carries out the reaction L-glutamate 5-semialdehyde + phosphate + NADP(+) = L-glutamyl 5-phosphate + NADPH + H(+). It participates in amino-acid biosynthesis; L-proline biosynthesis; L-glutamate 5-semialdehyde from L-glutamate: step 2/2. Its function is as follows. Catalyzes the NADPH-dependent reduction of L-glutamate 5-phosphate into L-glutamate 5-semialdehyde and phosphate. The product spontaneously undergoes cyclization to form 1-pyrroline-5-carboxylate. This chain is Gamma-glutamyl phosphate reductase, found in Rhodopseudomonas palustris (strain BisA53).